A 1347-amino-acid polypeptide reads, in one-letter code: BTB/POZ domain-containing protein 1 (1347 aa).

ANK repeat units follow at residues 51–81 (YGRT…DVFV) and 86–115 (SGYT…SFRS). RCC1 repeat units follow at residues 148–198 (GNEL…DKIL), 215–264 (SQNV…ALTK), 265–322 (FGSI…AWTD), and 324–372 (DIYS…CLLQ). BTB domains lie at 619 to 698 (SDVT…LSPW) and 758 to 829 (MDTV…VELF). Disordered regions lie at residues 1006 to 1029 (SSNQ…NVVN), 1104 to 1139 (EKAD…SKQV), 1193 to 1237 (EGSS…PLSI), and 1286 to 1347 (GILK…RAVK). Positions 1013 to 1023 (LNKEDAEEKSP) are enriched in basic and acidic residues. Polar residues-rich tracts occupy residues 1208–1237 (SNGS…PLSI) and 1297–1306 (NRKQGQASKQ). Residues 1336–1347 (TTHKKGKARAVK) are compositionally biased toward basic residues.

Interacts with cul3.

Its pathway is protein modification; protein ubiquitination. Its function is as follows. Probable substrate-specific adapter of an E3 ubiquitin-protein ligase complex which mediates the ubiquitination and subsequent proteasomal degradation of target proteins. In Schizosaccharomyces pombe (strain 972 / ATCC 24843) (Fission yeast), this protein is BTB/POZ domain-containing protein 1 (btb1).